Here is a 934-residue protein sequence, read N- to C-terminus: Progesterone receptor (934 aa).

Residues 1–49 (MTELKSKGPRAPHVAGGPPSPEVGSPLLCRPAAGPFQGSQTSDTLPEVS) form a disordered region. The interval 1–164 (MTELKSKGPR…PATQRVLSPL (164 aa)) is AF3; mediates transcriptional activation. A modulating, Pro-Rich region spans residues 1 to 567 (MTELKSKGPR…YSFESLPQKI (567 aa)). A Phosphoserine modification is found at Ser20. Positions 55 to 59 (LDGLL) match the LXXL motif 1 motif. The tract at residues 61–239 (PRLCQGQDPP…EDSAGPLLKG (179 aa)) is disordered. Phosphoserine is present on Ser81. An LXXL motif 2 motif is present at residues 115 to 119 (LDTLL). Residues Ser130 and Ser162 each carry the phosphoserine modification. Residues 165 to 305 (MSRSGGKTED…LATTMMDFIH (141 aa)) form a mediates transcriptional transrepression region. The short motif at 183 to 187 (KVLPR) is the Nuclear localization signal element. Ser190 carries the phosphoserine modification. Polar residues predominate over residues 191–203 (PSRQLLLPTSGSP). Phosphoserine is present on Ser213. A compositionally biased stretch (acidic residues) spans 220–231 (EVEEEDGSESED). Ser294 is subject to Phosphoserine; by MAPK1. Positions 331 to 375 (GGAGAASAFAPPQSSPSASSTPVAVGDFPDCAYPPDAEPKDNAYP) are disordered. Over residues 335–350 (AASAFAPPQSSPSASS) the composition is skewed to low complexity. The residue at position 345 (Ser345) is a Phosphoserine; by MAPK. Lys388 participates in a covalent cross-link: Glycyl lysine isopeptide (Lys-Gly) (interchain with G-Cter in SUMO); alternate. Residue Lys388 forms a Glycyl lysine isopeptide (Lys-Gly) (interchain with G-Cter in ubiquitin); alternate linkage. Ser400 carries the post-translational modification Phosphoserine; by CDK2. A disordered region spans residues 415-454 (PDFPLGPPPQLPPRAPPSRPGEAAVTAAPASASVSSASSP). The segment covering 418-433 (PLGPPPQLPPRAPPSR) has biased composition (pro residues). Residues 434–454 (PGEAAVTAAPASASVSSASSP) are compositionally biased toward low complexity. The segment at 456 to 547 (STLECILYKA…VYPPYLNYLR (92 aa)) is AF1; mediates transcriptional activation. Lys532 is covalently cross-linked (Glycyl lysine isopeptide (Lys-Gly) (interchain with G-Cter in SUMO)). 2 consecutive NR C4-type zinc fingers follow at residues 568–588 (CLIC…CGSC) and 604–628 (CAGR…LRKC). A DNA-binding region (nuclear receptor) is located at residues 568-640 (CLICGDEASG…AGMVLGGRKF (73 aa)). The residue at position 677 (Ser677) is a Phosphoserine. The NR LBD domain occupies 680 to 914 (QDIQLIPPLI…EFPEMMSEVI (235 aa)). Residues 688 to 934 (LIKLLMSIEP…MVKPLLFHKK (247 aa)) are AF2; mediates transcriptional activation. A progesterone-binding site is contributed by Arg767.

The protein belongs to the nuclear hormone receptor family. In terms of assembly, interacts with SMARD1 and UNC45A. Interacts with CUEDC2; the interaction promotes ubiquitination, decreases sumoylation, and represses transcriptional activity. Interacts with PIAS3; the interaction promotes sumoylation of PR in a hormone-dependent manner, inhibits DNA-binding, and alters nuclear export. Interacts with SP1; the interaction requires ligand-induced phosphorylation on Ser-345 by ERK1/2-MAPK. Interacts with PRMT2. Interacts with NCOA2 and NCOA1. Interacts with KLF9. Interacts with GTF2B. Post-translationally, phosphorylated on multiple serine sites. Several of these sites are hormone-dependent. Phosphorylation on Ser-294 is highly hormone-dependent and modulates ubiquitination and sumoylation on Lys-388. Phosphorylation on Ser-345 also requires induction by hormone. Basal phosphorylation on Ser-81, Ser-162, Ser-190 and Ser-400 is increased in response to progesterone and can be phosphorylated in vitro by the CDK2-A1 complex. Increased levels of phosphorylation on Ser-400 also in the presence of EGF, heregulin, IGF, PMA and FBS. Phosphorylation at this site by CDK2 is ligand-independent, and increases nuclear translocation and transcriptional activity. Phosphorylation at Ser-162 and Ser-294, but not at Ser-190, is impaired during the G(2)/M phase of the cell cycle. Phosphorylation on Ser-345 by ERK1/2 MAPK is required for interaction with SP1. In terms of processing, sumoylation is hormone-dependent and represses transcriptional activity. Sumoylation on all three sites is enhanced by PIAS3. Desumoylated by SENP1. Sumoylation on Lys-388, the main site of sumoylation, is repressed by ubiquitination on the same site, and modulated by phosphorylation at Ser-294. Ubiquitination is hormone-dependent and represses sumoylation on the same site. Promoted by MAPK-mediated phosphorylation on Ser-294. Ubiquitinated by UBR5, leading to its degradation: UBR5 specifically recognizes and binds ligand-bound PGR when it is not associated with coactivators (NCOAs). In presence of NCOAs, the UBR5-degron is not accessible, preventing its ubiquitination and degradation. Post-translationally, palmitoylated by ZDHHC7 and ZDHHC21. Palmitoylation is required for plasma membrane targeting and for rapid intracellular signaling via ERK and AKT kinases and cAMP generation.

The protein resides in the nucleus. The protein localises to the cytoplasm. The steroid hormones and their receptors are involved in the regulation of eukaryotic gene expression and affect cellular proliferation and differentiation in target tissues. Transcriptional activator of several progesteron-dependent promoters in a variety of cell types. Involved in activation of SRC-dependent MAPK signaling on hormone stimulation. This chain is Progesterone receptor (PGR), found in Colobus guereza (Mantled guereza).